Here is a 466-residue protein sequence, read N- to C-terminus: Glutamate--tRNA ligase 1 (466 aa).

The short motif at Pro-9–Gly-19 is the 'HIGH' region element. Zn(2+)-binding residues include Cys-98, Cys-100, Cys-125, and Glu-127. The 'KMSKS' region motif lies at Lys-236–Arg-240. Lys-239 contacts ATP.

This sequence belongs to the class-I aminoacyl-tRNA synthetase family. Glutamate--tRNA ligase type 1 subfamily. Monomer. It depends on Zn(2+) as a cofactor.

The protein localises to the cytoplasm. It catalyses the reaction tRNA(Glu) + L-glutamate + ATP = L-glutamyl-tRNA(Glu) + AMP + diphosphate. Its function is as follows. Catalyzes the attachment of glutamate to tRNA(Glu) in a two-step reaction: glutamate is first activated by ATP to form Glu-AMP and then transferred to the acceptor end of tRNA(Glu). The sequence is that of Glutamate--tRNA ligase 1 from Acidithiobacillus ferrooxidans (strain ATCC 53993 / BNL-5-31) (Leptospirillum ferrooxidans (ATCC 53993)).